The following is a 190-amino-acid chain: CASP-like protein 1U3 (190 aa).

The Cytoplasmic portion of the chain corresponds to 1–24 (MNGATVQPSYKEAGPVRYHPMHDC). The chain crosses the membrane as a helical span at residues 25-45 (LSLILRLLTLGATIAAIVAML). Residues 46 to 70 (KSTQTVPTLLGPHTARWKDFPAFEW) are Extracellular-facing. Residues 71 to 91 (FVIGNSIVLVYAALGTLAACL) traverse the membrane as a helical segment. Residues 92–113 (SLFTRRGPLSYTKTAWLTFLCD) lie on the Cytoplasmic side of the membrane. The chain crosses the membrane as a helical span at residues 114–134 (FICSCALISAGSTALGVAWIG). Residues 135–158 (KHGQHSAFWNAVCPTVDRFCDYVQ) lie on the Extracellular side of the membrane. The chain crosses the membrane as a helical span at residues 159-179 (GALIATLCGFIFQALSTVIAA). The Cytoplasmic segment spans residues 180 to 190 (SALHNLATHRH).

Belongs to the Casparian strip membrane proteins (CASP) family. In terms of assembly, homodimer and heterodimers.

Its subcellular location is the cell membrane. In Physcomitrium patens (Spreading-leaved earth moss), this protein is CASP-like protein 1U3.